Here is a 155-residue protein sequence, read N- to C-terminus: 3-hydroxyacyl-[acyl-carrier-protein] dehydratase FabZ (155 aa).

The active site involves His57.

The protein belongs to the thioester dehydratase family. FabZ subfamily.

It is found in the cytoplasm. The catalysed reaction is a (3R)-hydroxyacyl-[ACP] = a (2E)-enoyl-[ACP] + H2O. Functionally, involved in unsaturated fatty acids biosynthesis. Catalyzes the dehydration of short chain beta-hydroxyacyl-ACPs and long chain saturated and unsaturated beta-hydroxyacyl-ACPs. The protein is 3-hydroxyacyl-[acyl-carrier-protein] dehydratase FabZ of Sorangium cellulosum (strain So ce56) (Polyangium cellulosum (strain So ce56)).